Here is a 137-residue protein sequence, read N- to C-terminus: Mobilization protein B (137 aa).

Interacts with MobA and MobC to form the relaxosome.

Its function is as follows. This protein is essential to promote the specific transfer of the plasmid in the presence of conjugative plasmids. The chain is Mobilization protein B (mobB) from Escherichia coli.